A 488-amino-acid chain; its full sequence is Inosine-5'-monophosphate dehydrogenase (488 aa).

2 CBS domains span residues 95-153 (VISN…SIKI) and 157-216 (MTKE…AKDE). NAD(+) is bound by residues Asp-250 and 300–302 (GIG). Positions 302 and 304 each coordinate K(+). IMP is bound at residue Ser-305. Cys-307 is a K(+) binding site. Residue Cys-307 is the Thioimidate intermediate of the active site. IMP is bound by residues 340–342 (DGG), 363–364 (GS), and 387–391 (YRGMG). The active-site Proton acceptor is Arg-403. Residue Glu-417 coordinates IMP. Positions 467–488 (AGLAESHPHDVQITKESPNYSF) are disordered. 3 residues coordinate K(+): Glu-471, Ser-472, and His-473.

Belongs to the IMPDH/GMPR family. Homotetramer. K(+) serves as cofactor.

It catalyses the reaction IMP + NAD(+) + H2O = XMP + NADH + H(+). Its pathway is purine metabolism; XMP biosynthesis via de novo pathway; XMP from IMP: step 1/1. Mycophenolic acid (MPA) is a non-competitive inhibitor that prevents formation of the closed enzyme conformation by binding to the same site as the amobile flap. In contrast, mizoribine monophosphate (MZP) is a competitive inhibitor that induces the closed conformation. MPA is a potent inhibitor of mammalian IMPDHs but a poor inhibitor of the bacterial enzymes. MZP is a more potent inhibitor of bacterial IMPDH. Functionally, catalyzes the conversion of inosine 5'-phosphate (IMP) to xanthosine 5'-phosphate (XMP), the first committed and rate-limiting step in the de novo synthesis of guanine nucleotides, and therefore plays an important role in the regulation of cell growth. This Staphylococcus saprophyticus subsp. saprophyticus (strain ATCC 15305 / DSM 20229 / NCIMB 8711 / NCTC 7292 / S-41) protein is Inosine-5'-monophosphate dehydrogenase.